We begin with the raw amino-acid sequence, 490 residues long: Cobyric acid synthase (490 aa).

Positions 252-439 constitute a GATase cobBQ-type domain; that stretch reads RLKVVVPVLP…LHGLFESTAA (188 aa). The active-site Nucleophile is cysteine 333. Histidine 431 is an active-site residue.

This sequence belongs to the CobB/CobQ family. CobQ subfamily.

It participates in cofactor biosynthesis; adenosylcobalamin biosynthesis. Its function is as follows. Catalyzes amidations at positions B, D, E, and G on adenosylcobyrinic A,C-diamide. NH(2) groups are provided by glutamine, and one molecule of ATP is hydrogenolyzed for each amidation. In Pseudomonas aeruginosa (strain LESB58), this protein is Cobyric acid synthase.